The following is a 252-amino-acid chain: Curing of [URE3] protein 1 (252 aa).

The protein localises to the nucleus. Functionally, involved in the curing of prion [URE3]. Nuclear localization of this protein may suggest a role in transcription regulation, so it might exert an effect on [URE3] through known prion-curing chaperones or BTN2. This Saccharomyces cerevisiae (strain ATCC 204508 / S288c) (Baker's yeast) protein is Curing of [URE3] protein 1 (CUR1).